The primary structure comprises 155 residues: S-ribosylhomocysteine lyase (155 aa).

Residues His58, His62, and Cys125 each coordinate Fe cation.

It belongs to the LuxS family. In terms of assembly, homodimer. It depends on Fe cation as a cofactor.

The catalysed reaction is S-(5-deoxy-D-ribos-5-yl)-L-homocysteine = (S)-4,5-dihydroxypentane-2,3-dione + L-homocysteine. In terms of biological role, involved in the synthesis of autoinducer 2 (AI-2) which is secreted by bacteria and is used to communicate both the cell density and the metabolic potential of the environment. The regulation of gene expression in response to changes in cell density is called quorum sensing. Catalyzes the transformation of S-ribosylhomocysteine (RHC) to homocysteine (HC) and 4,5-dihydroxy-2,3-pentadione (DPD). In Helicobacter pylori (strain Shi470), this protein is S-ribosylhomocysteine lyase.